The sequence spans 206 residues: Probable nicotinate-nucleotide adenylyltransferase (206 aa).

It belongs to the NadD family.

It catalyses the reaction nicotinate beta-D-ribonucleotide + ATP + H(+) = deamido-NAD(+) + diphosphate. The protein operates within cofactor biosynthesis; NAD(+) biosynthesis; deamido-NAD(+) from nicotinate D-ribonucleotide: step 1/1. Functionally, catalyzes the reversible adenylation of nicotinate mononucleotide (NaMN) to nicotinic acid adenine dinucleotide (NaAD). The polypeptide is Probable nicotinate-nucleotide adenylyltransferase (Gloeobacter violaceus (strain ATCC 29082 / PCC 7421)).